The chain runs to 1086 residues: MEDLQTRIAALSPKQRALFESRLRAAAAPGPDPAIPRRPDDDGPVPLSFAQHRLWFLDQLEPGRPVYNVSASLRIGRPVTTEAVRDALGALTRRHEVLRTVFPADGGEPRQHIADSLTPPLTETDLRALPDSARAAAALRLCAEDKQRPFDLSSGPLLRCLLLRLRDDDALLFLTFHHTVFDGWSIGLLRRDLTALLHAAETGTDAGLPPLPIQYADFADWQRRMLDEKRLGELLGYWRERIRGAPPVIDLPFDRPRPAVATTEGARRRFALPAELTTALRDLAARSGATPFMTMLTVFAALLHRWSGERDMVIGTPVANRARPELDDLIGFFANTLAMRVRIEPGMSFGDLLAQVRQTVVEALARQDLPFERLVDEARTERTLTHNPLFQVAFVMEDGRDASELDTLLPERARDTHTPDSAKFDLTLVLTDRESTYTGYFEYNTALFEPVTIDRLGERLALLARSVAADPGWELAALPVLTRDEIRHLKEVNAPVADDPRHHRTLHGVLEDSARRHPDHTAVEAPDRQLTYRELDEAANRLAHHLLALGVRPEQPVGVALDGTADAIVATFAVLKAGAVLLPLDPEYPAERLEHILRRSGATLLLTQRSLAGRFAGNDVTTVLLDDDATRAALADGPADRPGLPIAPDRLAYVIFTSGSTGVPKGVMVPHRGIGSLTRSAEQFAQTPDSRVLRFASPSFDVSLLELLMTFDAGATLVLEPRALLVPGEDLARLIRERRVSTVLLSPSALSTLTAGELPGLRTVVMAGEAATLELAQQWCDGRDVFNGYGPTEATVLATIARCAPDRVPPLGRPVAGYTVHVLDDTLRPVPFGRQGELFLGGVGLARGYLDQPDVTADRFLPDPSGTEPGARLYRTGDVVRWGADGELEFLGRTDHQVKLRGFRIELGEIETRLEDHPGVRTAVVLVRGEGSDRRLAGYAVRAPGEERPTAAGLRQWLRDRLPGYMVPELFLVLDALPTSPNGKLDREALPDPLAQSGDTAGNRPPLLDPVEERISGIWQEVLGIAPPGSADNFFEVGGNSLSATRIIARVNQAFGVRLPVRSLFVEPTLSGLARSVSAERAEELP.

Residues 22-43 are disordered; that stretch reads RLRAAAAPGPDPAIPRRPDDDG. The segment at 45 to 484 is condensation; it reads VPLSFAQHRL…LAALPVLTRD (440 aa). The tract at residues 510 to 901 is adenylation; sequence LEDSARRHPD…GRTDHQVKLR (392 aa). The tract at residues 983-1007 is disordered; the sequence is GKLDREALPDPLAQSGDTAGNRPPL. One can recognise a Carrier domain in the interval 1006–1081; sequence PLLDPVEERI…GLARSVSAER (76 aa). Position 1041 is an O-(pantetheine 4'-phosphoryl)serine (S1041).

Belongs to the NRP synthetase family. It depends on pantetheine 4'-phosphate as a cofactor.

The enzyme catalyses holo-[peptidyl-carrier protein] + L-alanine + ATP = L-alanyl-[peptidyl-carrier protein] + AMP + diphosphate. It functions in the pathway secondary metabolite biosynthesis; bialaphos biosynthesis. Its function is as follows. Involved in the biosynthesis of phosphinothricin tripeptide (PTT), also known as bialaphos (BA), a natural-product antibiotic and potent herbicide. Adenylates L-alanine and loads it onto a peptidyl carrier domain via a thioester linkage to the phosphopanthetheine moiety. Shows weaker activity with aminobutyric acid and L-serine. The sequence is that of Phosphinothricin tripeptide synthetase PhsC from Streptomyces viridochromogenes (strain DSM 40736 / JCM 4977 / BCRC 1201 / Tue 494).